We begin with the raw amino-acid sequence, 98 residues long: NADH-ubiquinone oxidoreductase chain 4L (98 aa).

3 helical membrane passes run 2–22, 26–46, and 59–79; these read MMAV…TLMF, LMST…ITTI, and IPIV…ALLV.

This sequence belongs to the complex I subunit 4L family. In terms of assembly, core subunit of respiratory chain NADH dehydrogenase (Complex I) which is composed of 45 different subunits.

It localises to the mitochondrion inner membrane. It catalyses the reaction a ubiquinone + NADH + 5 H(+)(in) = a ubiquinol + NAD(+) + 4 H(+)(out). Core subunit of the mitochondrial membrane respiratory chain NADH dehydrogenase (Complex I) which catalyzes electron transfer from NADH through the respiratory chain, using ubiquinone as an electron acceptor. Part of the enzyme membrane arm which is embedded in the lipid bilayer and involved in proton translocation. This Phodopus sungorus (Striped hairy-footed hamster) protein is NADH-ubiquinone oxidoreductase chain 4L (MT-ND4L).